The sequence spans 57 residues: Lantibiotic nisin-A (57 aa).

The propeptide occupies 1–23; it reads MSTKDFNLDLVSVSKKDSGASPR. Residue Thr25 is modified to (Z)-2,3-didehydrobutyrine. A cross-link (lanthionine (Ser-Cys)) is located at residues 26–30; sequence SISLC. Position 28 is a 2,3-didehydroalanine (Ser) (Ser28). Cross-links (beta-methyllanthionine (Thr-Cys)) lie at residues 31–34, 36–42, 46–49, and 48–51; these read TPGC, TGALMGC, TATC, and TCHC. Position 56 is a 2,3-didehydroalanine (Ser) (Ser56).

This sequence belongs to the type A lantibiotic family. Post-translationally, maturation of lantibiotics involves the enzymatic conversion of Thr, and Ser into dehydrated AA and the formation of thioether bonds with cysteine. This is followed by membrane translocation and cleavage of the modified precursor. In terms of processing, the structure of the 2,3-didehydrobutyrine is not discussed in PubMed:8454055. However, in Fig. 1 the residue is diagrammed as the Z-isomer.

In terms of biological role, lanthionine-containing peptide antibiotic (lantibiotic) active on Gram-positive bacteria. The bactericidal activity of lantibiotics is based on depolarization of energized bacterial cytoplasmic membranes, initiated by the formation of aqueous transmembrane pores. The protein is Lantibiotic nisin-A (spaN) of Lactococcus lactis subsp. lactis (Streptococcus lactis).